Consider the following 425-residue polypeptide: Histidine--tRNA ligase (425 aa).

The protein belongs to the class-II aminoacyl-tRNA synthetase family. Homodimer.

The protein localises to the cytoplasm. The enzyme catalyses tRNA(His) + L-histidine + ATP = L-histidyl-tRNA(His) + AMP + diphosphate + H(+). The protein is Histidine--tRNA ligase of Shewanella sp. (strain MR-4).